The primary structure comprises 75 residues: Conotoxin Vn5.6 (75 aa).

Positions 1–19 (MLCLPVFIILLLLASPAAP) are cleaved as a signal peptide. Positions 20 to 59 (NPLEKRIQSDLIRAALEDADMKTGEREILNIIDSISDVAK) are excised as a propeptide. Q60 is subject to Pyrrolidone carboxylic acid.

The protein belongs to the conotoxin T superfamily. Post-translationally, contains 2 disulfide bonds that can be either 'C1-C3, C2-C4' or 'C1-C4, C2-C3', since these disulfide connectivities have been observed for conotoxins with cysteine framework V (for examples, see AC P0DQQ7 and AC P81755). Expressed by the venom duct.

It localises to the secreted. This is Conotoxin Vn5.6 from Conus ventricosus (Mediterranean cone).